Here is a 456-residue protein sequence, read N- to C-terminus: Hydroxyproline dehydrogenase (456 aa).

2 positions are modified to N6-acetyllysine: lysine 310 and lysine 320.

Belongs to the proline oxidase family. The cofactor is FAD.

The catalysed reaction is trans-4-hydroxy-L-proline + a quinone = (3R,5S)-1-pyrroline-3-hydroxy-5-carboxylate + a quinol + H(+). It carries out the reaction L-proline + a quinone = (S)-1-pyrroline-5-carboxylate + a quinol + H(+). In terms of biological role, dehydrogenase that converts trans-4-L-hydroxyproline to delta-1-pyrroline-3-hydroxy-5-carboxylate (Hyp) using ubiquinone-10 as the terminal electron acceptor. Can also use proline as a substrate but with a very much lower efficiency. Does not react with other diastereomers of Hyp: trans-4-D-hydroxyproline and cis-4-L-hydroxyproline. Ubiquininone analogs such as menadione, duroquinone and ubiquinone-1 react more efficiently than oxygen as the terminal electron acceptor during catalysis. The protein is Hydroxyproline dehydrogenase of Rattus norvegicus (Rat).